The following is a 248-amino-acid chain: Small ribosomal subunit protein eS6 (248 aa).

Residues 213-248 (LLAQRKKESKAKREEAKRRRSASMRESKSSISSDKK) form a disordered region. The span at 223–248 (AKREEAKRRRSASMRESKSSISSDKK) shows a compositional bias: basic and acidic residues.

It belongs to the eukaryotic ribosomal protein eS6 family. Component of the small ribosomal subunit. Part of the small subunit (SSU) processome, composed of more than 70 proteins and the RNA chaperone small nucleolar RNA (snoRNA) U3. In terms of processing, ribosomal protein S6 is the major substrate of protein kinases in eukaryote ribosomes.

It localises to the cytoplasm. Its subcellular location is the nucleus. It is found in the nucleolus. Its function is as follows. Component of the 40S small ribosomal subunit. Plays an important role in controlling cell growth and proliferation through the selective translation of particular classes of mRNA. Part of the small subunit (SSU) processome, first precursor of the small eukaryotic ribosomal subunit. During the assembly of the SSU processome in the nucleolus, many ribosome biogenesis factors, an RNA chaperone and ribosomal proteins associate with the nascent pre-rRNA and work in concert to generate RNA folding, modifications, rearrangements and cleavage as well as targeted degradation of pre-ribosomal RNA by the RNA exosome. This Glossina morsitans morsitans (Savannah tsetse fly) protein is Small ribosomal subunit protein eS6 (RpS6).